Reading from the N-terminus, the 878-residue chain is Outer membrane usher protein FimD (878 aa).

Positions Met-1–Ala-45 are cleaved as a signal peptide. Cys-855 and Cys-877 are joined by a disulfide.

Belongs to the fimbrial export usher family.

Its subcellular location is the cell outer membrane. Its function is as follows. Involved in the export and assembly of FimA fimbrial subunits across the outer membrane. The chain is Outer membrane usher protein FimD (fimD) from Escherichia coli (strain K12).